The following is a 37-amino-acid chain: MVEPLLSGIVLGLITVSALGLFVAAFLQYRRGNQFEI.

The chain crosses the membrane as a helical span at residues 5 to 25; it reads LLSGIVLGLITVSALGLFVAA.

It belongs to the PetG family. The 4 large subunits of the cytochrome b6-f complex are cytochrome b6, subunit IV (17 kDa polypeptide, PetD), cytochrome f and the Rieske protein, while the 4 small subunits are PetG, PetL, PetM and PetN. The complex functions as a dimer.

The protein localises to the plastid. It localises to the chloroplast thylakoid membrane. Component of the cytochrome b6-f complex, which mediates electron transfer between photosystem II (PSII) and photosystem I (PSI), cyclic electron flow around PSI, and state transitions. PetG is required for either the stability or assembly of the cytochrome b6-f complex. This chain is Cytochrome b6-f complex subunit 5, found in Phaeodactylum tricornutum (strain CCAP 1055/1).